Here is a 204-residue protein sequence, read N- to C-terminus: Holliday junction resolvase RecU (204 aa).

A disordered region spans residues 1–24 (MTIHYPNGQQPVQHYNTHNELPTP). The span at 7–24 (NGQQPVQHYNTHNELPTP) shows a compositional bias: polar residues. Residues Thr87, Asp89, Asp102, and Gln121 each coordinate Mg(2+).

Belongs to the RecU family. It depends on Mg(2+) as a cofactor.

The protein resides in the cytoplasm. It catalyses the reaction Endonucleolytic cleavage at a junction such as a reciprocal single-stranded crossover between two homologous DNA duplexes (Holliday junction).. In terms of biological role, endonuclease that resolves Holliday junction intermediates in genetic recombination. Cleaves mobile four-strand junctions by introducing symmetrical nicks in paired strands. Promotes annealing of linear ssDNA with homologous dsDNA. Required for DNA repair, homologous recombination and chromosome segregation. The polypeptide is Holliday junction resolvase RecU (Limosilactobacillus reuteri (strain DSM 20016) (Lactobacillus reuteri)).